Consider the following 453-residue polypeptide: uncharacterized protein (453 aa).

In terms of domain architecture, TRAM spans 5 to 63; it reads LLKKNQSVELTIEDLTHDGSGVGKIDGYPLFIPNALPGEKITAKITKLNKNYGFARMEN. 4 residues coordinate [4Fe-4S] cluster: Cys76, Cys82, Cys85, and Cys162. 4 residues coordinate S-adenosyl-L-methionine: Gln285, Tyr314, Glu335, and Asp383. Residue Cys410 is the Nucleophile of the active site.

This sequence belongs to the class I-like SAM-binding methyltransferase superfamily. RNA M5U methyltransferase family.

This is an uncharacterized protein from Listeria innocua serovar 6a (strain ATCC BAA-680 / CLIP 11262).